The chain runs to 390 residues: GTPase Obg (390 aa).

Residues 1-159 enclose the Obg domain; it reads MKFVDEASIL…RDLLLELMLL (159 aa). Residues 127 to 147 are disordered; sequence NTRFKSSVNRTPRQKTNGTPG. Residues 129–145 show a composition bias toward polar residues; that stretch reads RFKSSVNRTPRQKTNGT. Residues 160–333 form the OBG-type G domain; it reads ADVGMLGMPN…LCWDVMTFII (174 aa). Residues 166–173, 191–195, 213–216, 283–286, and 314–316 contribute to the GTP site; these read GMPNAGKS, FTTLV, DIPG, NKID, and SAA. Positions 173 and 193 each coordinate Mg(2+).

The protein belongs to the TRAFAC class OBG-HflX-like GTPase superfamily. OBG GTPase family. As to quaternary structure, monomer. The cofactor is Mg(2+).

It localises to the cytoplasm. Its function is as follows. An essential GTPase which binds GTP, GDP and possibly (p)ppGpp with moderate affinity, with high nucleotide exchange rates and a fairly low GTP hydrolysis rate. Plays a role in control of the cell cycle, stress response, ribosome biogenesis and in those bacteria that undergo differentiation, in morphogenesis control. The sequence is that of GTPase Obg from Salmonella paratyphi A (strain ATCC 9150 / SARB42).